We begin with the raw amino-acid sequence, 661 residues long: B3 domain-containing protein Os12g0591400 (661 aa).

4 DNA-binding regions (TF-B3) span residues 2 to 95 (GDQK…FNPS), 197 to 290 (KTRC…FNPS), 437 to 535 (LYIT…FKES), and 562 to 658 (TNLT…IRKG).

The protein resides in the nucleus. The sequence is that of B3 domain-containing protein Os12g0591400 from Oryza sativa subsp. japonica (Rice).